Consider the following 419-residue polypeptide: Bilin biosynthesis protein CpeY (419 aa).

Functionally, involved in the biosynthesis of bilin. This Synechococcus sp. (strain WH8020) protein is Bilin biosynthesis protein CpeY (cpeY).